A 389-amino-acid polypeptide reads, in one-letter code: Phospho-N-acetylmuramoyl-pentapeptide-transferase (389 aa).

A run of 10 helical transmembrane segments spans residues 25 to 45 (RAVMATITALGIGLVCGPWVI), 73 to 93 (TMGGVLILIGIAVATLLWGDL), 97 to 117 (FIWIVMLVTFGFGVIGWVDDY), 135 to 155 (FWQSVIGLFAAVYLAFSVSEA), 190 to 210 (ISYPLGVWGFIVLTYFVIVGA), 222 to 242 (GLVIMPVVLVGGSLGVFAYVM), 258 to 278 (GAGELLIFCSAMGGAGLAFLW), 286 to 306 (VFMGDVGALALGGALGTVAVI), 311 to 331 (IVLFIMGGIFVAETLSVMLQV), and 366 to 386 (QVVVRFWIITLMLCLFGLSTL).

Belongs to the glycosyltransferase 4 family. MraY subfamily. Mg(2+) serves as cofactor.

Its subcellular location is the cell inner membrane. It catalyses the reaction UDP-N-acetyl-alpha-D-muramoyl-L-alanyl-gamma-D-glutamyl-meso-2,6-diaminopimeloyl-D-alanyl-D-alanine + di-trans,octa-cis-undecaprenyl phosphate = di-trans,octa-cis-undecaprenyl diphospho-N-acetyl-alpha-D-muramoyl-L-alanyl-D-glutamyl-meso-2,6-diaminopimeloyl-D-alanyl-D-alanine + UMP. It participates in cell wall biogenesis; peptidoglycan biosynthesis. Catalyzes the initial step of the lipid cycle reactions in the biosynthesis of the cell wall peptidoglycan: transfers peptidoglycan precursor phospho-MurNAc-pentapeptide from UDP-MurNAc-pentapeptide onto the lipid carrier undecaprenyl phosphate, yielding undecaprenyl-pyrophosphoryl-MurNAc-pentapeptide, known as lipid I. This Burkholderia ambifaria (strain ATCC BAA-244 / DSM 16087 / CCUG 44356 / LMG 19182 / AMMD) (Burkholderia cepacia (strain AMMD)) protein is Phospho-N-acetylmuramoyl-pentapeptide-transferase.